We begin with the raw amino-acid sequence, 111 residues long: MICOS complex subunit MIC13 (111 aa).

A helical membrane pass occupies residues 8-26 (VVKFATKVTIAGGALYVAY).

The protein belongs to the MICOS complex subunit Mic13 family. As to quaternary structure, component of the mitochondrial contact site and cristae organizing system (MICOS) complex.

It is found in the mitochondrion inner membrane. Functionally, component of the MICOS complex, a large protein complex of the mitochondrial inner membrane that plays crucial roles in the maintenance of crista junctions, inner membrane architecture, and formation of contact sites to the outer membrane. Constituent of mature MICOS complex, it is required for the formation of cristae junction (CJ) and maintenance of cristae morphology. Required for the incorporation of MIC10 into the MICOS complex. The protein is MICOS complex subunit MIC13 of Danio rerio (Zebrafish).